Reading from the N-terminus, the 309-residue chain is Homoserine O-succinyltransferase (309 aa).

The active-site Acyl-thioester intermediate is Cys-142. Substrate contacts are provided by Lys-163 and Ser-192. Catalysis depends on His-235, which acts as the Proton acceptor. The active site involves Glu-237. A substrate-binding site is contributed by Arg-249.

It belongs to the MetA family. Homodimer.

It localises to the cytoplasm. It carries out the reaction L-homoserine + succinyl-CoA = O-succinyl-L-homoserine + CoA. Its pathway is amino-acid biosynthesis; L-methionine biosynthesis via de novo pathway; O-succinyl-L-homoserine from L-homoserine: step 1/1. Functionally, transfers a succinyl group from succinyl-CoA to L-homoserine, forming succinyl-L-homoserine. The chain is Homoserine O-succinyltransferase from Salmonella gallinarum (strain 287/91 / NCTC 13346).